The primary structure comprises 153 residues: UPF0756 membrane protein LSL_0936 (153 aa).

Transmembrane regions (helical) follow at residues 4–24, 26–46, 51–71, 86–106, and 116–136; these read WIFLGLILLIAYLGKNSSLLI, GAVVIVIKLFPFLSQKLYPVI, INWGVTIISVAILIPIATGQI, WIAVVCGILVAILSKHGVNLL, and LVIGTIIGVVFLKGVAAGPVI.

This sequence belongs to the UPF0756 family.

It localises to the cell membrane. The sequence is that of UPF0756 membrane protein LSL_0936 from Ligilactobacillus salivarius (strain UCC118) (Lactobacillus salivarius).